A 493-amino-acid polypeptide reads, in one-letter code: Glutamyl-tRNA(Gln) amidotransferase subunit A (493 aa).

Active-site charge relay system residues include K78 and S158. S182 serves as the catalytic Acyl-ester intermediate.

The protein belongs to the amidase family. GatA subfamily. In terms of assembly, heterotrimer of A, B and C subunits.

It carries out the reaction L-glutamyl-tRNA(Gln) + L-glutamine + ATP + H2O = L-glutaminyl-tRNA(Gln) + L-glutamate + ADP + phosphate + H(+). In terms of biological role, allows the formation of correctly charged Gln-tRNA(Gln) through the transamidation of misacylated Glu-tRNA(Gln) in organisms which lack glutaminyl-tRNA synthetase. The reaction takes place in the presence of glutamine and ATP through an activated gamma-phospho-Glu-tRNA(Gln). The protein is Glutamyl-tRNA(Gln) amidotransferase subunit A of Rickettsia typhi (strain ATCC VR-144 / Wilmington).